The following is a 685-amino-acid chain: MFSRLLNRGNGGVNKNITSGLLLRRTTTTTTRLSYINNSPTLSIRSFCSKSTTITSDEKLDLSGYTTDRIRNFSIIAHIDHGKTTLSTKLLSLTGTLPKSIYGSGEDSLVQKEKSEERREQYLDKLQVEKERGITVKAQTCTMKYRNKEDGKDYLLNLIDTPGHVDFSYEVSRSLMACQGALLVVDAVQGVQAQTMANYYLALDSGLEVIPVINKIDLPTADVERVKQELKDAFGFHPDDAVLVSAKTGVGITDILPAVIDRIPPPQEPTKSPKVPFKALLFDSWFDRFRGVICLIKVVDGKVKKGDSIVSAGNKQTYEVFDVGIMHPEQRPAPSLFTGQVGYITPGMKTSKEARVGDTFYMKDFPVEPLPGFQPAKQMVFAGIYPVDSLDYTQLRESFEKLMLTDSSISMTNETSVALGMGFRCGFLGLLHMDVVLQRLEQEYGQVVIATPPTVPYRCLLTDGKEILISNPAGYPSAEHLSKTFEPMVTGHVTLPTEYFGAVVKLCMDSRGILTNQETLEGNRTRITFNFPLGEIVTDFYDNLKRISSGYASLDYEDNGYQESDVAKVRVLLNGEEVDSLSAIVHKSNAQRYSRSLVKRLRKVIDRQMFQVNIQAMVGSDVQARETISAMRKDVTAKCYGGDITRRRKLLDKQKEGKKRMKQMGCVELSQEGFLKLMKSTNDDD.

A mitochondrion-targeting transit peptide spans 1–54 (MFSRLLNRGNGGVNKNITSGLLLRRTTTTTTRLSYINNSPTLSIRSFCSKSTTI). The tr-type G domain maps to 68-267 (DRIRNFSIIA…AVIDRIPPPQ (200 aa)). GTP contacts are provided by residues 77–84 (AHIDHGKT), 160–164 (DTPGH), and 214–217 (NKID).

Belongs to the TRAFAC class translation factor GTPase superfamily. Classic translation factor GTPase family. LepA subfamily.

The protein localises to the mitochondrion inner membrane. It catalyses the reaction GTP + H2O = GDP + phosphate + H(+). Promotes mitochondrial protein synthesis. May act as a fidelity factor of the translation reaction, by catalyzing a one-codon backward translocation of tRNAs on improperly translocated ribosomes. Binds to mitochondrial ribosomes in a GTP-dependent manner. This is Translation factor GUF1 homolog, mitochondrial (guf1) from Dictyostelium discoideum (Social amoeba).